Reading from the N-terminus, the 379-residue chain is Tryptophan 2,3-dioxygenase (379 aa).

Substrate is bound by residues 57–61 (FIITH) and arginine 128. Histidine 312 serves as a coordination point for heme. Threonine 327 lines the substrate pocket.

Belongs to the tryptophan 2,3-dioxygenase family. Homotetramer. Dimer of dimers. Heme is required as a cofactor.

It carries out the reaction L-tryptophan + O2 = N-formyl-L-kynurenine. It participates in amino-acid degradation; L-tryptophan degradation via kynurenine pathway; L-kynurenine from L-tryptophan: step 1/2. It functions in the pathway pigment biosynthesis; ommochrome biosynthesis. Heme-dependent dioxygenase that catalyzes the oxidative cleavage of the L-tryptophan (L-Trp) pyrrole ring and converts L-tryptophan to N-formyl-L-kynurenine. Catalyzes the oxidative cleavage of the indole moiety. Required during larval growth to control the level of potentially harmful free tryptophan in the hemolymph. In the adult the same reaction is the first step in the ommochrome biosynthetic pathway. The polypeptide is Tryptophan 2,3-dioxygenase (Drosophila melanogaster (Fruit fly)).